A 285-amino-acid polypeptide reads, in one-letter code: Homeobox protein Hox-A13b (285 aa).

A DNA-binding region (homeobox) is located at residues 219-278 (GRKKRVPYTKVQLKELEREYAANKFITKDKRRRISAQTNLTERQVTIWFQNRRVKEKKVV).

Belongs to the Abd-B homeobox family.

The protein resides in the nucleus. Its function is as follows. Sequence-specific transcription factor which is part of a developmental regulatory system that provides cells with specific positional identities on the anterior-posterior axis. The protein is Homeobox protein Hox-A13b (hoxa13b) of Takifugu rubripes (Japanese pufferfish).